The chain runs to 218 residues: Protein GrpE (218 aa).

The disordered stretch occupies residues Met1–Gly78. Low complexity predominate over residues Pro14–Ala58.

Belongs to the GrpE family. In terms of assembly, homodimer.

It localises to the cytoplasm. Its function is as follows. Participates actively in the response to hyperosmotic and heat shock by preventing the aggregation of stress-denatured proteins, in association with DnaK and GrpE. It is the nucleotide exchange factor for DnaK and may function as a thermosensor. Unfolded proteins bind initially to DnaJ; upon interaction with the DnaJ-bound protein, DnaK hydrolyzes its bound ATP, resulting in the formation of a stable complex. GrpE releases ADP from DnaK; ATP binding to DnaK triggers the release of the substrate protein, thus completing the reaction cycle. Several rounds of ATP-dependent interactions between DnaJ, DnaK and GrpE are required for fully efficient folding. The polypeptide is Protein GrpE (Bifidobacterium longum (strain NCC 2705)).